The chain runs to 95 residues: uncharacterized protein (95 aa).

This is an uncharacterized protein from Escherichia coli (strain K12).